We begin with the raw amino-acid sequence, 302 residues long: Sulfate adenylyltransferase subunit 2 (302 aa).

The protein belongs to the PAPS reductase family. CysD subfamily. As to quaternary structure, heterodimer composed of CysD, the smaller subunit, and CysN.

The enzyme catalyses sulfate + ATP + H(+) = adenosine 5'-phosphosulfate + diphosphate. It functions in the pathway sulfur metabolism; hydrogen sulfide biosynthesis; sulfite from sulfate: step 1/3. With CysN forms the ATP sulfurylase (ATPS) that catalyzes the adenylation of sulfate producing adenosine 5'-phosphosulfate (APS) and diphosphate, the first enzymatic step in sulfur assimilation pathway. APS synthesis involves the formation of a high-energy phosphoric-sulfuric acid anhydride bond driven by GTP hydrolysis by CysN coupled to ATP hydrolysis by CysD. The protein is Sulfate adenylyltransferase subunit 2 of Psychromonas ingrahamii (strain DSM 17664 / CCUG 51855 / 37).